Reading from the N-terminus, the 258-residue chain is UPF0246 protein VV1_0535 (258 aa).

It belongs to the UPF0246 family.

This Vibrio vulnificus (strain CMCP6) protein is UPF0246 protein VV1_0535.